A 950-amino-acid polypeptide reads, in one-letter code: UvrABC system protein A (950 aa).

Position 36 to 43 (Gly36 to Ser43) interacts with ATP. The segment at Cys260–Cys287 adopts a C4-type zinc-finger fold. ABC transporter domains are found at residues Phe317–Leu599 and Ala619–Lys947. Residue Gly651–Ser658 coordinates ATP. The segment at Cys750–Cys776 adopts a C4-type zinc-finger fold.

This sequence belongs to the ABC transporter superfamily. UvrA family. As to quaternary structure, forms a heterotetramer with UvrB during the search for lesions.

It is found in the cytoplasm. In terms of biological role, the UvrABC repair system catalyzes the recognition and processing of DNA lesions. UvrA is an ATPase and a DNA-binding protein. A damage recognition complex composed of 2 UvrA and 2 UvrB subunits scans DNA for abnormalities. When the presence of a lesion has been verified by UvrB, the UvrA molecules dissociate. In Borreliella burgdorferi (strain ATCC 35210 / DSM 4680 / CIP 102532 / B31) (Borrelia burgdorferi), this protein is UvrABC system protein A.